Here is a 436-residue protein sequence, read N- to C-terminus: Suppressor of cytokine signaling 4 (436 aa).

The segment at 1–25 (MAENNSKNVDVRPKTSRSRSADRKD) is disordered. Residues 9 to 25 (VDVRPKTSRSRSADRKD) show a composition bias toward basic and acidic residues. Residues 283–378 (CYWGVMDKYA…FFEPLLSTPL (96 aa)) enclose the SH2 domain. Residues 373-422 (LLSTPLIRTFPFSLQHICRTVICNCTTYDGIDALPIPSPMKLYLKEYHYK) enclose the SOCS box domain.

Its pathway is protein modification; protein ubiquitination. SOCS family proteins form part of a classical negative feedback system that regulates cytokine signal transduction. Substrate-recognition component of a SCF-like ECS (Elongin BC-CUL2/5-SOCS-box protein) E3 ubiquitin-protein ligase complex which mediates the ubiquitination and subsequent proteasomal degradation of target proteins. Inhibits EGF signaling by mediating the degradation of the Tyr-phosphorylated EGF receptor/EGFR. In Mus musculus (Mouse), this protein is Suppressor of cytokine signaling 4 (Socs4).